A 63-amino-acid chain; its full sequence is Conotoxin PnMRCL-0111 (63 aa).

Positions 1–22 (MHCLSVFVILLLLTASAPSVDA) are cleaved as a signal peptide. Residues 23 to 50 (QPKTEDDVPLSSFHDDLQRTVRTLLDIR) constitute a propeptide that is removed on maturation. At tryptophan 62 the chain carries Tryptophan amide.

It belongs to the conotoxin T superfamily. Post-translationally, contains 2 disulfide bonds that can be either 'C1-C3, C2-C4' or 'C1-C4, C2-C3', since these disulfide connectivities have been observed for conotoxins with cysteine framework V (for examples, see AC P0DQQ7 and AC P81755). In terms of tissue distribution, expressed by the venom duct.

The protein localises to the secreted. This is Conotoxin PnMRCL-0111 from Conus pennaceus (Feathered cone).